The primary structure comprises 116 residues: Large ribosomal subunit protein bL19 (116 aa).

It belongs to the bacterial ribosomal protein bL19 family.

Its function is as follows. This protein is located at the 30S-50S ribosomal subunit interface and may play a role in the structure and function of the aminoacyl-tRNA binding site. The protein is Large ribosomal subunit protein bL19 of Pasteurella multocida (strain Pm70).